A 336-amino-acid polypeptide reads, in one-letter code: tRNA N6-adenosine threonylcarbamoyltransferase (336 aa).

The Fe cation site is built by His-114 and His-118. Residues 136–140 (LVSGG), Asp-169, Gly-182, Asp-186, and Asn-275 each bind substrate. Position 301 (Asp-301) interacts with Fe cation.

This sequence belongs to the KAE1 / TsaD family. Fe(2+) is required as a cofactor.

Its subcellular location is the cytoplasm. It catalyses the reaction L-threonylcarbamoyladenylate + adenosine(37) in tRNA = N(6)-L-threonylcarbamoyladenosine(37) in tRNA + AMP + H(+). Its function is as follows. Required for the formation of a threonylcarbamoyl group on adenosine at position 37 (t(6)A37) in tRNAs that read codons beginning with adenine. Is involved in the transfer of the threonylcarbamoyl moiety of threonylcarbamoyl-AMP (TC-AMP) to the N6 group of A37, together with TsaE and TsaB. TsaD likely plays a direct catalytic role in this reaction. The chain is tRNA N6-adenosine threonylcarbamoyltransferase from Streptococcus pneumoniae serotype 19F (strain G54).